The sequence spans 331 residues: 3-dehydrosphinganine reductase TSC10B (331 aa).

The Lumenal portion of the chain corresponds to 1 to 7 (MAAIFSL). A helical membrane pass occupies residues 8–28 (FLFFILFIVSLLIILSFIVRP). At 29 to 262 (RSVTIPIKFR…ICFDGIKAGK (234 aa)) the chain is on the cytoplasmic side. 7 residues coordinate NADPH: Gly-44, Ser-46, Ser-47, Gly-48, Arg-69, Lys-73, and Asp-95. A GXSXG motif is present at residues 44–48 (GGSSG). Ser-172 functions as the Proton donor in the catalytic mechanism. The Proton acceptor role is filled by Tyr-186. NADP(+) contacts are provided by Tyr-186 and Lys-190. Lys-190 serves as the catalytic Lowers pKa of active site Tyr. A helical transmembrane segment spans residues 263–283 (FTVTCHFIGFLLSIASTGMSP). The Lumenal portion of the chain corresponds to 284 to 286 (QGS). The chain crosses the membrane as a helical span at residues 287 to 307 (FWLALTEVMFGGLIRLASLVF). The Cytoplasmic segment spans residues 308–331 (QWQWYKTIEKWSQRNKKEVNSKLA).

Belongs to the short-chain dehydrogenases/reductases (SDR) family. As to expression, expressed in roots, leaves, stems and flowers.

It is found in the endoplasmic reticulum membrane. The catalysed reaction is sphinganine + NADP(+) = 3-oxosphinganine + NADPH + H(+). Its pathway is lipid metabolism; sphingolipid metabolism. In terms of biological role, catalyzes the reduction of 3'-oxosphinganine (3-ketodihydrosphingosine/KDS) to sphinganine (dihydrosphingosine/DHS), the second step of de novo sphingolipid biosynthesis. In plants, sphingolipids seems to play a critical role in mineral ion homeostasis, most likely through their involvement in the ion transport functionalities of membrane systems in the root. Is stereospecific for D-erythro-DHS production and does not produce L-threo-DHS. The polypeptide is 3-dehydrosphinganine reductase TSC10B (TSC10B) (Arabidopsis thaliana (Mouse-ear cress)).